A 443-amino-acid chain; its full sequence is Putative metabolite transport protein YaaU (443 aa).

Over 1–18 the chain is Cytoplasmic; that stretch reads MQPSRNFDDLKFSSIHRR. Residues 19–39 traverse the membrane as a helical segment; sequence ILLWGSGGPFLDGYVLVMIGV. At 40 to 53 the chain is on the periplasmic side; the sequence is ALEQLTPALKLDAD. A helical transmembrane segment spans residues 54-74; it reads WIGLLGAGTLAGLFVGTSLFG. Over 75–84 the chain is Cytoplasmic; the sequence is YISDKVGRRK. The helical transmembrane segment at 85 to 105 threads the bilayer; that stretch reads MFLIDIIAIGVISVATMFVSS. At 106 to 113 the chain is on the periplasmic side; the sequence is PVELLVMR. The chain crosses the membrane as a helical span at residues 114–134; that stretch reads VLIGIVIGADYPIATSMITEF. The Cytoplasmic portion of the chain corresponds to 135–145; it reads SSTRQRAFSIS. A helical transmembrane segment spans residues 146–166; the sequence is FIAAMWYVGATCADLVGYWLY. At 167–173 the chain is on the periplasmic side; the sequence is DVEGGWR. A helical membrane pass occupies residues 174-194; sequence WMLGSAAIPCLLILIGRFELP. At 195-241 the chain is on the cytoplasmic side; it reads ESPRWLLRKGRVKECEEMMIKLFGEPVAFDEEQPQQTRFRDLFNRRH. Residues 242-262 form a helical membrane-spanning segment; it reads FPFVLFVAAIWTCQVIPMFAI. Topologically, residues 263–282 are periplasmic; it reads YTFGPQIVGLLGLGVGKNAA. The chain crosses the membrane as a helical span at residues 283–303; that stretch reads LGNVVISLFFMLGCIPPMLWL. Residues 304–309 lie on the Cytoplasmic side of the membrane; sequence NTAGRR. Residues 310-329 traverse the membrane as a helical segment; it reads PLLIGSFAMMTLALAVLGLI. The Periplasmic portion of the chain corresponds to 330 to 334; it reads PDMGI. Residues 335–357 form a helical membrane-spanning segment; the sequence is WLVVMAFAVYAFFSGGPGNLQWL. At 358–373 the chain is on the cytoplasmic side; sequence YPNELFPTDIRASAVG. Residues 374–394 traverse the membrane as a helical segment; that stretch reads VIMSLSRIGTIVSTWALPIFI. Residues 395–401 are Periplasmic-facing; that stretch reads NNYGISN. A helical transmembrane segment spans residues 402–422; it reads TMLMGAGISLFGLLISVAFAP. Over 423-443 the chain is Cytoplasmic; that stretch reads ETRGMSLAQTSNMTIRGQRMG.

The protein belongs to the major facilitator superfamily. Sugar transporter (TC 2.A.1.1) family.

It localises to the cell inner membrane. The protein is Putative metabolite transport protein YaaU (yaaU) of Escherichia coli (strain K12).